We begin with the raw amino-acid sequence, 385 residues long: Lipid-A-disaccharide synthase 2 (385 aa).

This sequence belongs to the LpxB family.

It carries out the reaction a lipid X + a UDP-2-N,3-O-bis[(3R)-3-hydroxyacyl]-alpha-D-glucosamine = a lipid A disaccharide + UDP + H(+). Its pathway is bacterial outer membrane biogenesis; LPS lipid A biosynthesis. In terms of biological role, condensation of UDP-2,3-diacylglucosamine and 2,3-diacylglucosamine-1-phosphate to form lipid A disaccharide, a precursor of lipid A, a phosphorylated glycolipid that anchors the lipopolysaccharide to the outer membrane of the cell. The sequence is that of Lipid-A-disaccharide synthase 2 from Legionella pneumophila (strain Paris).